Reading from the N-terminus, the 160-residue chain is Transcription antitermination protein NusB (160 aa).

It belongs to the NusB family.

In terms of biological role, involved in transcription antitermination. Required for transcription of ribosomal RNA (rRNA) genes. Binds specifically to the boxA antiterminator sequence of the ribosomal RNA (rrn) operons. The chain is Transcription antitermination protein NusB from Chlamydia pneumoniae (Chlamydophila pneumoniae).